Here is a 490-residue protein sequence, read N- to C-terminus: Acetyl-coenzyme A carboxylase carboxyl transferase subunit beta, chloroplastic (490 aa).

The tract at residues 184 to 203 (LNSSENEGSSRRTRTKGSDL) is disordered. One can recognise a CoA carboxyltransferase N-terminal domain in the interval 221 to 490 (LWVQCENCYG…PLNQKSSKIK (270 aa)). Positions 225, 228, 244, and 247 each coordinate Zn(2+). A C4-type zinc finger spans residues 225 to 247 (CENCYGLNYKKFLKSKMNICEQC).

The protein belongs to the AccD/PCCB family. Acetyl-CoA carboxylase is a heterohexamer composed of biotin carboxyl carrier protein, biotin carboxylase and 2 subunits each of ACCase subunit alpha and ACCase plastid-coded subunit beta (accD). Zn(2+) serves as cofactor. In terms of tissue distribution, RNA expressed in leaf, root, stem, and tuber; the least expression occurs in stems. RNA persists even in senescent leaves.

It localises to the plastid. Its subcellular location is the chloroplast stroma. The catalysed reaction is N(6)-carboxybiotinyl-L-lysyl-[protein] + acetyl-CoA = N(6)-biotinyl-L-lysyl-[protein] + malonyl-CoA. It participates in lipid metabolism; malonyl-CoA biosynthesis; malonyl-CoA from acetyl-CoA: step 1/1. Component of the acetyl coenzyme A carboxylase (ACC) complex. Biotin carboxylase (BC) catalyzes the carboxylation of biotin on its carrier protein (BCCP) and then the CO(2) group is transferred by the transcarboxylase to acetyl-CoA to form malonyl-CoA. The polypeptide is Acetyl-coenzyme A carboxylase carboxyl transferase subunit beta, chloroplastic (Solanum tuberosum (Potato)).